The primary structure comprises 257 residues: Achaete-scute complex protein T3 (257 aa).

A bHLH domain is found at 83–145; the sequence is PSVARRNARE…RIAVEYIRGL (63 aa). The segment at 161–221 is disordered; the sequence is YNSADESSND…SEISGGGYIK (61 aa). Low complexity-rich tracts occupy residues 165–184 and 193–213; these read DESS…LDSS and QSAQ…SGSE.

In terms of assembly, efficient DNA binding requires dimerization with another bHLH protein. L(1)SC, SC and AC strongly label the presumptive stomatogastric nervous system, while ASE is more prominent in the presumptive procephalic lobe.

In terms of biological role, AS-C proteins are involved in the determination of the neuronal precursors in the peripheral nervous system and the central nervous system. The sequence is that of Achaete-scute complex protein T3 (l(1)sc) from Drosophila melanogaster (Fruit fly).